An 85-amino-acid polypeptide reads, in one-letter code: U4-theraphotoxin-Hhn1a (85 aa).

Positions 1-22 are cleaved as a signal peptide; that stretch reads MKMTLIAILTCAAVLVLHTTAA. Positions 23 to 48 are excised as a propeptide; that stretch reads EELEAESQLMEVGMPDTELEAVDEER. Cystine bridges form between cysteine 52/cysteine 66, cysteine 56/cysteine 77, and cysteine 71/cysteine 82.

It belongs to the neurotoxin 12 (Hwtx-2) family. 02 (Hwtx-2) subfamily. As to quaternary structure, monomer. In terms of tissue distribution, expressed by the venom gland.

It localises to the secreted. In terms of biological role, neurotoxin active on both insects and mammals. The polypeptide is U4-theraphotoxin-Hhn1a (Cyriopagopus hainanus (Chinese bird spider)).